The sequence spans 358 residues: 3-dehydroquinate synthase (358 aa).

Residues 104–108 (GVIGD), 128–129 (TT), K140, K149, and 167–170 (FLNT) contribute to the NAD(+) site. Zn(2+) is bound by residues E182, H246, and H260.

Belongs to the sugar phosphate cyclases superfamily. Dehydroquinate synthase family. Co(2+) is required as a cofactor. Requires Zn(2+) as cofactor. NAD(+) serves as cofactor.

The protein resides in the cytoplasm. It catalyses the reaction 7-phospho-2-dehydro-3-deoxy-D-arabino-heptonate = 3-dehydroquinate + phosphate. The protein operates within metabolic intermediate biosynthesis; chorismate biosynthesis; chorismate from D-erythrose 4-phosphate and phosphoenolpyruvate: step 2/7. In terms of biological role, catalyzes the conversion of 3-deoxy-D-arabino-heptulosonate 7-phosphate (DAHP) to dehydroquinate (DHQ). The polypeptide is 3-dehydroquinate synthase (Staphylococcus carnosus (strain TM300)).